A 431-amino-acid chain; its full sequence is Trigger factor (431 aa).

In terms of domain architecture, PPIase FKBP-type spans Gly163 to Pro248.

This sequence belongs to the FKBP-type PPIase family. Tig subfamily.

Its subcellular location is the cytoplasm. It carries out the reaction [protein]-peptidylproline (omega=180) = [protein]-peptidylproline (omega=0). Its function is as follows. Involved in protein export. Acts as a chaperone by maintaining the newly synthesized protein in an open conformation. Functions as a peptidyl-prolyl cis-trans isomerase. The chain is Trigger factor from Latilactobacillus sakei subsp. sakei (strain 23K) (Lactobacillus sakei subsp. sakei).